The sequence spans 460 residues: MNTSAPPAVSPNITVLAPGKGPWQVAFIGITTGLLSLATVTGNLLVLISFKVNTELKTVNNYFLLSLACADLIIGTFSMNLYTTYLLMGHWALGTLACDLWLALDYVASNASVMNLLLISFDRYFSVTRPLSYRAKRTPRRAALMIGLAWLVSFVLWAPAILFWQYLVGERTVLAGQCYIQFLSQPIITFGTAMAAFYLPVTVMCTLYWRIYRETENRARELAALQGSETPGKGGGSSSSSERSQPGAEGSPETPPGRCCRCCRAPRLLQAYSWKEEEEEDEGSMESLTSSEGEEPGSEVVIKMPMVDPEAQAPAKQPPRSSPNTVKRPTRKGRERAGKGQKPRGKEQLAKRKTFSLVKEKKAARTLSAILLAFIVTWTPYNIMVLVSTFCKDCVPETLWELGYWLCYVNSTINPMCYALCNKAFRDTFRLLLLCRWDKRRWRKIPKRPGSVHRTPSRQC.

Residues 1 to 22 are Extracellular-facing; sequence MNTSAPPAVSPNITVLAPGKGP. Residues N2 and N12 are each glycosylated (N-linked (GlcNAc...) asparagine). Residues 23-48 form a helical membrane-spanning segment; it reads WQVAFIGITTGLLSLATVTGNLLVLI. Over 49–62 the chain is Cytoplasmic; sequence SFKVNTELKTVNNY. A helical membrane pass occupies residues 63-84; it reads FLLSLACADLIIGTFSMNLYTT. The Extracellular segment spans residues 85-95; sequence YLLMGHWALGT. A helical membrane pass occupies residues 96–121; the sequence is LACDLWLALDYVASNASVMNLLLISF. A disulfide bridge connects residues C98 and C178. Residues 122–142 are Cytoplasmic-facing; sequence DRYFSVTRPLSYRAKRTPRRA. A helical transmembrane segment spans residues 143–164; it reads ALMIGLAWLVSFVLWAPAILFW. Topologically, residues 165–185 are extracellular; sequence QYLVGERTVLAGQCYIQFLSQ. The chain crosses the membrane as a helical span at residues 186–209; it reads PIITFGTAMAAFYLPVTVMCTLYW. Residues 210-366 lie on the Cytoplasmic side of the membrane; that stretch reads RIYRETENRA…LVKEKKAART (157 aa). Disordered stretches follow at residues 225–256, 274–296, and 310–351; these read LQGSETPGKGGGSSSSSERSQPGAEGSPETPP, WKEEEEEDEGSMESLTSSEGEEP, and EAQA…QLAK. Residue T230 is modified to Phosphothreonine. Residues 238–247 show a composition bias toward low complexity; that stretch reads SSSSERSQPG. The span at 328–343 shows a compositional bias: basic residues; it reads RPTRKGRERAGKGQKP. A helical membrane pass occupies residues 367–390; sequence LSAILLAFIVTWTPYNIMVLVSTF. The Extracellular portion of the chain corresponds to 391-397; it reads CKDCVPE. A helical transmembrane segment spans residues 398–420; the sequence is TLWELGYWLCYVNSTINPMCYAL. Residues 421-460 lie on the Cytoplasmic side of the membrane; that stretch reads CNKAFRDTFRLLLLCRWDKRRWRKIPKRPGSVHRTPSRQC. A Phosphothreonine modification is found at T428. The residue at position 451 (S451) is a Phosphoserine. At T455 the chain carries Phosphothreonine. A Phosphoserine modification is found at S457.

The protein belongs to the G-protein coupled receptor 1 family. Muscarinic acetylcholine receptor subfamily. CHRM1 sub-subfamily. As to quaternary structure, interacts with GPRASP2. Interacts with TMEM147.

The protein localises to the cell membrane. The protein resides in the postsynaptic cell membrane. In terms of biological role, the muscarinic acetylcholine receptor mediates various cellular responses, including inhibition of adenylate cyclase, breakdown of phosphoinositides and modulation of potassium channels through the action of G proteins. Primary transducing effect is Pi turnover. This Sus scrofa (Pig) protein is Muscarinic acetylcholine receptor M1 (CHRM1).